The chain runs to 232 residues: Enolase-phosphatase E1 (232 aa).

It belongs to the HAD-like hydrolase superfamily. MasA/MtnC family. Monomer. Requires Mg(2+) as cofactor.

The enzyme catalyses 5-methylsulfanyl-2,3-dioxopentyl phosphate + H2O = 1,2-dihydroxy-5-(methylsulfanyl)pent-1-en-3-one + phosphate. It participates in amino-acid biosynthesis; L-methionine biosynthesis via salvage pathway; L-methionine from S-methyl-5-thio-alpha-D-ribose 1-phosphate: step 3/6. It functions in the pathway amino-acid biosynthesis; L-methionine biosynthesis via salvage pathway; L-methionine from S-methyl-5-thio-alpha-D-ribose 1-phosphate: step 4/6. Its function is as follows. Bifunctional enzyme that catalyzes the enolization of 2,3-diketo-5-methylthiopentyl-1-phosphate (DK-MTP-1-P) into the intermediate 2-hydroxy-3-keto-5-methylthiopentenyl-1-phosphate (HK-MTPenyl-1-P), which is then dephosphorylated to form the acireductone 1,2-dihydroxy-3-keto-5-methylthiopentene (DHK-MTPene). In Xylella fastidiosa (strain 9a5c), this protein is Enolase-phosphatase E1.